Consider the following 994-residue polypeptide: Phosphoenolpyruvate carboxylase (994 aa).

The segment at 1-67 is disordered; the sequence is MKAVRSDKTT…GRTREDKDHP (67 aa). 2 stretches are compositionally biased toward low complexity: residues 9–24 and 34–57; these read TTQA…PAKA and AAPQ…PKAN. Active-site residues include His-204 and Lys-646.

Belongs to the PEPCase type 1 family. It depends on Mg(2+) as a cofactor.

It catalyses the reaction oxaloacetate + phosphate = phosphoenolpyruvate + hydrogencarbonate. Forms oxaloacetate, a four-carbon dicarboxylic acid source for the tricarboxylic acid cycle. This Paraburkholderia xenovorans (strain LB400) protein is Phosphoenolpyruvate carboxylase.